A 170-amino-acid polypeptide reads, in one-letter code: MNLKKIAIASSVFAGITMALTCHAVTVTATHTVESDAEFTIDWVDAGPTTTDAKDGEVWGHLDMTQTRGTPTFGKLRNPQGETSPGPLKAPFSFTGPDGHTARAYLDSYGAPIHNYAGDNLANGVKVGSGSGNTPFVVGTASRLTARIFGDQTLVPGVYRTTFELTTWTD.

Residues 1–24 (MNLKKIAIASSVFAGITMALTCHA) form the signal peptide.

In terms of biological role, this protein is a non-fimbrial hemagglutinin that is specific for blood group M. The sequence is that of M-agglutinin (bmaE) from Escherichia coli.